We begin with the raw amino-acid sequence, 546 residues long: Chaperonin GroEL (546 aa).

ATP-binding positions include 30–33, Lys-51, 87–91, Gly-415, 479–481, and Asp-495; these read TLGP, DGTTT, and NAA.

Belongs to the chaperonin (HSP60) family. In terms of assembly, forms a cylinder of 14 subunits composed of two heptameric rings stacked back-to-back. Interacts with the co-chaperonin GroES.

It localises to the cytoplasm. It carries out the reaction ATP + H2O + a folded polypeptide = ADP + phosphate + an unfolded polypeptide.. Functionally, together with its co-chaperonin GroES, plays an essential role in assisting protein folding. The GroEL-GroES system forms a nano-cage that allows encapsulation of the non-native substrate proteins and provides a physical environment optimized to promote and accelerate protein folding. The polypeptide is Chaperonin GroEL (Pseudomonas putida (strain W619)).